Consider the following 292-residue polypeptide: 4-hydroxy-tetrahydrodipicolinate synthase (292 aa).

A pyruvate-binding site is contributed by Thr45. Tyr133 serves as the catalytic Proton donor/acceptor. Lys161 acts as the Schiff-base intermediate with substrate in catalysis. Ile203 is a binding site for pyruvate.

It belongs to the DapA family. Homodimer.

Its subcellular location is the cytoplasm. It catalyses the reaction L-aspartate 4-semialdehyde + pyruvate = (2S,4S)-4-hydroxy-2,3,4,5-tetrahydrodipicolinate + H2O + H(+). The protein operates within amino-acid biosynthesis; L-lysine biosynthesis via DAP pathway; (S)-tetrahydrodipicolinate from L-aspartate: step 3/4. In terms of biological role, catalyzes the condensation of (S)-aspartate-beta-semialdehyde [(S)-ASA] and pyruvate to 4-hydroxy-tetrahydrodipicolinate (HTPA). This chain is 4-hydroxy-tetrahydrodipicolinate synthase, found in Pseudomonas putida (strain W619).